Reading from the N-terminus, the 1144-residue chain is ATP-dependent helicase/deoxyribonuclease subunit B (1144 aa).

The region spanning 1-276 is the UvrD-like helicase ATP-binding domain; that stretch reads MAIRYVFGRA…IDLDRNERPV (276 aa). 8–15 provides a ligand contact to ATP; sequence GRAGRGKS. The UvrD-like helicase C-terminal domain occupies 274-584; the sequence is RPVLPKVQEI…LVGSIERSKS (311 aa). 4 residues coordinate [4Fe-4S] cluster: Cys784, Cys1102, Cys1105, and Cys1111.

The protein belongs to the helicase family. AddB/RexB type 1 subfamily. In terms of assembly, heterodimer of AddA and AddB. The cofactor is Mg(2+). [4Fe-4S] cluster is required as a cofactor.

In terms of biological role, the heterodimer acts as both an ATP-dependent DNA helicase and an ATP-dependent, dual-direction single-stranded exonuclease. Recognizes the chi site generating a DNA molecule suitable for the initiation of homologous recombination. The AddB subunit has 5' -&gt; 3' nuclease activity but not helicase activity. In Alkaliphilus oremlandii (strain OhILAs) (Clostridium oremlandii (strain OhILAs)), this protein is ATP-dependent helicase/deoxyribonuclease subunit B.